We begin with the raw amino-acid sequence, 701 residues long: Polyribonucleotide nucleotidyltransferase (701 aa).

The Mg(2+) site is built by aspartate 487 and aspartate 493. The 60-residue stretch at 554 to 613 (PTMIAMKIDTDKIRDVIGKGGATIRAICEETKASIDIEDDGSIKIFGETKEAAEAARQRV) folds into the KH domain. In terms of domain architecture, S1 motif spans 623-691 (GKIYVGKVER…NRGRIKLSIK (69 aa)).

This sequence belongs to the polyribonucleotide nucleotidyltransferase family. As to quaternary structure, component of the RNA degradosome, which is a multiprotein complex involved in RNA processing and mRNA degradation. It depends on Mg(2+) as a cofactor.

It localises to the cytoplasm. The catalysed reaction is RNA(n+1) + phosphate = RNA(n) + a ribonucleoside 5'-diphosphate. Functionally, involved in mRNA degradation. Catalyzes the phosphorolysis of single-stranded polyribonucleotides processively in the 3'- to 5'-direction. This Pseudomonas putida (strain W619) protein is Polyribonucleotide nucleotidyltransferase.